The chain runs to 76 residues: MAKSKNHTNHNQNKKAHRNGIKRPLRKRHESTLGMDVKFLINQRYARKGNLSREESVKRYNERIASQKGKPKPVTL.

Over residues 1–29 (MAKSKNHTNHNQNKKAHRNGIKRPLRKRH) the composition is skewed to basic residues. 2 disordered regions span residues 1 to 33 (MAKSKNHTNHNQNKKAHRNGIKRPLRKRHESTL) and 47 to 76 (RKGNLSREESVKRYNERIASQKGKPKPVTL). Phosphoserine is present on Ser31. Residues 51 to 62 (LSREESVKRYNE) are compositionally biased toward basic and acidic residues.

Belongs to the eukaryotic ribosomal protein eL29 family.

This Drosophila melanogaster (Fruit fly) protein is Large ribosomal subunit protein eL29 (RpL29).